Reading from the N-terminus, the 232-residue chain is U-scoloptoxin(11)-Ssd2a (232 aa).

The first 21 residues, 1–21, serve as a signal peptide directing secretion; it reads MFQFCLLILLLAPGRFFSALG. Positions 22 to 32 are excised as a propeptide; it reads KPQETLTVENR.

Contains 8 disulfide bonds. As to expression, expressed by the venom gland.

The protein resides in the secreted. The chain is U-scoloptoxin(11)-Ssd2a from Scolopendra dehaani (Thai centipede).